The sequence spans 182 residues: Dephospho-CoA kinase (182 aa).

One can recognise a DPCK domain in the interval 4–182; the sequence is VVAITGGIGS…IINNDHKIMT (179 aa). 12-17 contacts ATP; it reads GSGKTT.

This sequence belongs to the CoaE family.

The protein resides in the cytoplasm. The enzyme catalyses 3'-dephospho-CoA + ATP = ADP + CoA + H(+). Its pathway is cofactor biosynthesis; coenzyme A biosynthesis; CoA from (R)-pantothenate: step 5/5. Its function is as follows. Catalyzes the phosphorylation of the 3'-hydroxyl group of dephosphocoenzyme A to form coenzyme A. In Aliivibrio fischeri (strain ATCC 700601 / ES114) (Vibrio fischeri), this protein is Dephospho-CoA kinase.